A 353-amino-acid polypeptide reads, in one-letter code: MTTTQDWIMIGGYGPESYNQQSSYQRALLEAAKDKMTEAISANLDLDLISNRFIVADFGCASGPNTFVAVQNIIDAVEEKYLRETGQNPEDNIEFQVLFNDLRINDFNTLFQTLPPGRRYFSAGVPGSFFNRVLPKQSFHIAVMSYAFLFTSKIPKGIMDRDSPLWNKDMQCTGFNPAVKKAYLEQYSIDTKNLLDARAEELMPGGLMLLLGSCMRDGVKMSETLKGTVMDFIGESLNDLAQKGVTEQEKVDTFKTSIYFAEQGEIRQIIEENGKFTIEAFEDIIHSKNEFPLDPKTLAISFKALYGAFISAHFGIEVMRKAFELVEVKAREQISRLHKVKPGMQYLIVLRKN.

Tyrosine 18 is an S-adenosyl-L-methionine binding site. Substrate contacts are provided by residues tyrosine 18 and 21 to 25; that span reads QSSYQ. S-adenosyl-L-methionine-binding positions include glycine 59, 59 to 60, asparagine 65, 99 to 102, 128 to 130, and 145 to 147; these read GC, FNDL, SFF, and SYA. 146–150 serves as a coordination point for substrate; it reads YAFLF. Mg(2+) contacts are provided by asparagine 167, aspartate 252, and phenylalanine 254. Residues serine 301 and tyrosine 306 each coordinate substrate.

This sequence belongs to the methyltransferase superfamily. SABATH family. In terms of assembly, homodimer. It depends on Mg(2+) as a cofactor.

This chain is Paraxanthine methyltransferase 2, found in Arabidopsis thaliana (Mouse-ear cress).